The sequence spans 156 residues: Ribonuclease P protein component (156 aa).

The disordered stretch occupies residues Gly-126 to Ser-156.

It belongs to the RnpA family. In terms of assembly, consists of a catalytic RNA component (M1 or rnpB) and a protein subunit.

The catalysed reaction is Endonucleolytic cleavage of RNA, removing 5'-extranucleotides from tRNA precursor.. Its function is as follows. RNaseP catalyzes the removal of the 5'-leader sequence from pre-tRNA to produce the mature 5'-terminus. It can also cleave other RNA substrates such as 4.5S RNA. The protein component plays an auxiliary but essential role in vivo by binding to the 5'-leader sequence and broadening the substrate specificity of the ribozyme. This chain is Ribonuclease P protein component, found in Nocardia farcinica (strain IFM 10152).